Here is a 921-residue protein sequence, read N- to C-terminus: Isoleucine--tRNA ligase (921 aa).

The 'HIGH' region motif lies at 57–67 (PYANGDIHMGH). Glu-552 contributes to the L-isoleucyl-5'-AMP binding site. Positions 593–597 (KMSKS) match the 'KMSKS' region motif. Lys-596 provides a ligand contact to ATP. Zn(2+) is bound by residues Cys-888, Cys-891, Cys-908, and Cys-911.

Belongs to the class-I aminoacyl-tRNA synthetase family. IleS type 1 subfamily. Monomer. Zn(2+) serves as cofactor.

The protein resides in the cytoplasm. It catalyses the reaction tRNA(Ile) + L-isoleucine + ATP = L-isoleucyl-tRNA(Ile) + AMP + diphosphate. Catalyzes the attachment of isoleucine to tRNA(Ile). As IleRS can inadvertently accommodate and process structurally similar amino acids such as valine, to avoid such errors it has two additional distinct tRNA(Ile)-dependent editing activities. One activity is designated as 'pretransfer' editing and involves the hydrolysis of activated Val-AMP. The other activity is designated 'posttransfer' editing and involves deacylation of mischarged Val-tRNA(Ile). The chain is Isoleucine--tRNA ligase from Bacillus cereus (strain B4264).